A 323-amino-acid chain; its full sequence is Ferrochelatase (323 aa).

2 residues coordinate Fe cation: H196 and E277.

The protein belongs to the ferrochelatase family.

It localises to the cytoplasm. It catalyses the reaction heme b + 2 H(+) = protoporphyrin IX + Fe(2+). It functions in the pathway porphyrin-containing compound metabolism; protoheme biosynthesis; protoheme from protoporphyrin-IX: step 1/1. Catalyzes the ferrous insertion into protoporphyrin IX. This is Ferrochelatase from Haemophilus influenzae (strain 86-028NP).